The chain runs to 367 residues: Ferrochelatase (367 aa).

2 residues coordinate Fe cation: His226 and Glu307.

The protein belongs to the ferrochelatase family.

It localises to the cytoplasm. The enzyme catalyses heme b + 2 H(+) = protoporphyrin IX + Fe(2+). The protein operates within porphyrin-containing compound metabolism; protoheme biosynthesis; protoheme from protoporphyrin-IX: step 1/1. In terms of biological role, catalyzes the ferrous insertion into protoporphyrin IX. The chain is Ferrochelatase from Burkholderia pseudomallei (strain 1106a).